A 213-amino-acid polypeptide reads, in one-letter code: Ras-like protein rasX (213 aa).

16–23 (GDGGVGKT) lines the GTP pocket. Residues 38 to 46 (YDPTIEDSY) carry the Effector region motif. GTP contacts are provided by residues 63–67 (DTAGQ) and 122–125 (NKSD). Residue Cys-210 is modified to Cysteine methyl ester. The S-geranylgeranyl cysteine moiety is linked to residue Cys-210. Residues 211-213 (KMM) constitute a propeptide, removed in mature form.

It belongs to the small GTPase superfamily. Ras family.

Its subcellular location is the cell membrane. It carries out the reaction GTP + H2O = GDP + phosphate + H(+). In terms of biological role, ras proteins bind GDP/GTP and possess intrinsic GTPase activity. In Dictyostelium discoideum (Social amoeba), this protein is Ras-like protein rasX (rasX).